A 523-amino-acid chain; its full sequence is Signal peptide peptidase-like 2A (523 aa).

The N-terminal stretch at methionine 1–alanine 25 is a signal peptide. Topologically, residues glutamine 26 to leucine 175 are lumenal. Asparagine 51, asparagine 61, asparagine 69, asparagine 119, asparagine 129, and asparagine 135 each carry an N-linked (GlcNAc...) asparagine glycan. The region spanning leucine 70–leucine 155 is the PA domain. A helical membrane pass occupies residues valine 176–isoleucine 196. Residues glutamate 197–proline 224 lie on the Cytoplasmic side of the membrane. The helical transmembrane segment at leucine 225–tyrosine 245 threads the bilayer. Over arginine 246–tryptophan 247 the chain is Lumenal. A helical membrane pass occupies residues leucine 248–leucine 268. Topologically, residues serine 269–asparagine 288 are cytoplasmic. The chain crosses the membrane as a helical span at residues isoleucine 289–valine 309. Residues phenylalanine 310–arginine 315 are Lumenal-facing. Residues tryptophan 316–methionine 336 form a helical membrane-spanning segment. Topologically, residues lysine 337–cysteine 344 are cytoplasmic. The chain crosses the membrane as a helical span at residues valine 345 to isoleucine 365. The active site involves aspartate 355. The Lumenal segment spans residues threonine 366–serine 403. The chain crosses the membrane as a helical span at residues valine 404–isoleucine 424. Residue aspartate 416 is part of the active site. The Cytoplasmic segment spans residues alanine 425–tyrosine 440. The chain crosses the membrane as a helical span at residues isoleucine 441 to methionine 461. Topologically, residues lysine 462–threonine 463 are lumenal. A helical membrane pass occupies residues glycine 464–tryptophan 484. Positions proline 466–leucine 468 match the PAL motif. Residues serine 485–glutamine 523 lie on the Cytoplasmic side of the membrane. A YXXo lysosomal targeting motif motif is present at residues tyrosine 498–methionine 501.

It belongs to the peptidase A22B family. Interacts with ITM2B. In terms of processing, glycosylated.

The protein localises to the late endosome membrane. The protein resides in the lysosome membrane. It localises to the membrane. Intramembrane-cleaving aspartic protease (I-CLiP) that cleaves type II membrane signal peptides in the hydrophobic plane of the membrane. Functions in FASLG, ITM2B and TNF processing. Catalyzes the intramembrane cleavage of the anchored fragment of shed TNF-alpha (TNF), which promotes the release of the intracellular domain (ICD) for signaling to the nucleus. Also responsible for the intramembrane cleavage of Fas antigen ligand FASLG, which promotes the release of the intracellular FasL domain (FasL ICD). Essential for degradation of the invariant chain CD74 that plays a central role in the function of antigen-presenting cells in the immune system. Plays a role in the regulation of innate and adaptive immunity. This chain is Signal peptide peptidase-like 2A, found in Mus musculus (Mouse).